The following is a 65-amino-acid chain: Beta-defensin 106A (65 aa).

The signal sequence occupies residues 1–20 (MRTFLFLFVVLFFLTPAKNA). 3 cysteine pairs are disulfide-bonded: C26/C53, C33/C47, and C37/C54.

It belongs to the beta-defensin family. Monomer. Interacts with CCR2 (via extracellular N-terminal region); this interaction may preferentially require specific tyrosine sulfation on CCR2.

The protein localises to the secreted. The protein resides in the membrane. Functionally, has antibacterial activity. Acts as a ligand for C-C chemokine receptor CCR2. In Hylobates lar (Lar gibbon), this protein is Beta-defensin 106A (DEFB106A).